A 161-amino-acid chain; its full sequence is Nucleotide-binding protein Sden_0770 (161 aa).

The protein belongs to the YajQ family.

In terms of biological role, nucleotide-binding protein. The polypeptide is Nucleotide-binding protein Sden_0770 (Shewanella denitrificans (strain OS217 / ATCC BAA-1090 / DSM 15013)).